We begin with the raw amino-acid sequence, 862 residues long: Dipeptidyl peptidase 9 (862 aa).

Active-site charge relay system residues include Ser-729, Asp-807, and His-839. Ser-729 is a binding site for Val-boroPro.

This sequence belongs to the peptidase S9B family. DPPIV subfamily. Homodimer. Forms a ternary complex with NLRP1, composed of a DPP9 homodimer, one full-length NLRP1 protein, and one cleaved C-terminus of NLRP1 (NACHT, LRR and PYD domains-containing protein 1, C-terminus). Forms a ternary complex with CARD8, composed of a DPP9 homodimer, one full-length NLRP1 protein, and one cleaved C-terminus of CARD8 (Caspase recruitment domain-containing protein 8, C-terminus). In the ternary complex, only one subunit of the DPP9 homodimer is bound to NLRP1 or CARD8. As to expression, detected in kidney, skin, brain, thymus and liver (at protein level).

It localises to the cytoplasm. The protein resides in the cytosol. It catalyses the reaction Release of an N-terminal dipeptide, Xaa-Yaa-|-Zaa-, from a polypeptide, preferentially when Yaa is Pro, provided Zaa is neither Pro nor hydroxyproline.. Inhibited by the serine proteinase inhibitor 4-(2-aminoethyl)benzenesulphonyl fluoride (AEBSF), and by di-isopropylfluorophosphate. Inhibited by Val-boroPro (Talabostat, PT-100), a non-selective inhibitor, which triggers pyroptosis in monocytes and macrophages. Val-boroPro inhibits activity by binding to the active site, mimicking a substrate-bound state, thereby displacing the C-terminal fragment of NLRP1, leading to activation of the NLRP1 inflammasome. In contrast, Val-boroPro does not directly displaces CARD8: it acts by promoting degradation of the N-terminal part of CARD8, leading to indirect disruption of the ternary complex. Functionally, dipeptidyl peptidase that cleaves off N-terminal dipeptides from proteins having a Pro or Ala residue at position 2. Acts as a key inhibitor of caspase-1-dependent monocyte and macrophage pyroptosis in resting cells by preventing activation of NLRP1 and CARD8. Sequesters the cleaved C-terminal part of NLRP1 and CARD8, which respectively constitute the active part of the NLRP1 and CARD8 inflammasomes, in a ternary complex, thereby preventing their oligomerization and activation. The dipeptidyl peptidase activity is required to suppress NLRP1 and CARD8; however, neither NLRP1 nor CARD8 are bona fide substrates of DPP9, suggesting the existence of substrate(s) required for NLRP1 and CARD8 inhibition. The polypeptide is Dipeptidyl peptidase 9 (Mus musculus (Mouse)).